We begin with the raw amino-acid sequence, 794 residues long: K(+)-insensitive pyrophosphate-energized proton pump (794 aa).

The next 5 helical transmembrane spans lie at 20-40 (ALVAVIAVVALAALVLAGVLV), 74-94 (TLGVFAVVVFFLLMLLPADDW), 102-122 (IFFLIGAAFSAATGYIGMWLA), 163-183 (GVVGMFTVGLGLLGACCVVLV), and 194-214 (GFGLGAALIAMFMRVGGGIFT). Residue lysine 215 participates in substrate binding. Mg(2+) contacts are provided by aspartate 218, aspartate 222, asparagine 245, and aspartate 248. The next 6 membrane-spanning stretches (helical) occupy residues 264–284 (YAVTLVAALILGKVAFGDFGL), 285–305 (AFPLLVPAIGVLTAMIGIFAV), 321–341 (GFFISAVISLVLVAVAVFVYL), 365–385 (ILALVAVAIGIVLAALIQQLT), 422–442 (AVYTALLIGLGVYGAFLLGGT), and 446–466 (LALFAVALAGTGLLTTVGVIV). Aspartate 476 is a Mg(2+) binding site. Transmembrane regions (helical) follow at residues 508 to 528 (AITKGIAIATAVLAAAALFGS), 564 to 584 (VGLIAGAAVVFLFSGLAINAV), and 641 to 661 (IFIGFTLGVGALGAFLAGAIG). Ca(2+)-binding residues include aspartate 678, aspartate 704, and aspartate 708. Residue lysine 711 participates in substrate binding. A run of 2 helical transmembrane segments spans residues 717 to 737 (AINPLLKVMNLVALLIAPAVI) and 747 to 767 (VVVRVLIAVVAFAVIAAAVYV).

The protein belongs to the H(+)-translocating pyrophosphatase (TC 3.A.10) family. K(+)-insensitive subfamily. As to quaternary structure, homodimer. Mg(2+) is required as a cofactor.

It is found in the cell membrane. The catalysed reaction is diphosphate + H2O + H(+)(in) = 2 phosphate + 2 H(+)(out). Proton pump that utilizes the energy of pyrophosphate hydrolysis as the driving force for proton movement across the membrane. Generates a proton motive force. In Streptomyces coelicolor (strain ATCC BAA-471 / A3(2) / M145), this protein is K(+)-insensitive pyrophosphate-energized proton pump.